Consider the following 137-residue polypeptide: MSKPTNSAPSQRMLRVGEQVRAAITQVLQRGEVRDDLIEKTVISISEVRMSTDLKVATAYVSPLGVSDHDTVIAALNRHAKYIRGRIGGQLRQMKYMPEVRFRDDTSFDNYQKIDALLRSPEVARDLGPDEDKQEDE.

It belongs to the RbfA family. Monomer. Binds 30S ribosomal subunits, but not 50S ribosomal subunits or 70S ribosomes.

It localises to the cytoplasm. In terms of biological role, one of several proteins that assist in the late maturation steps of the functional core of the 30S ribosomal subunit. Associates with free 30S ribosomal subunits (but not with 30S subunits that are part of 70S ribosomes or polysomes). Required for efficient processing of 16S rRNA. May interact with the 5'-terminal helix region of 16S rRNA. The protein is Ribosome-binding factor A of Allorhizobium ampelinum (strain ATCC BAA-846 / DSM 112012 / S4) (Agrobacterium vitis (strain S4)).